Here is a 253-residue protein sequence, read N- to C-terminus: HTH-type transcriptional regulator AdiY (253 aa).

Residues Asp149–Gln246 enclose the HTH araC/xylS-type domain. 2 consecutive DNA-binding regions (H-T-H motif) follow at residues Ser166–Asn187 and Ile213–Tyr236.

In Escherichia coli (strain K12), this protein is HTH-type transcriptional regulator AdiY (adiY).